Consider the following 647-residue polypeptide: Threonine--tRNA ligase (647 aa).

Positions 1–63 (MYMIQLTFPD…EHDGKIELVM (63 aa)) constitute a TGS domain. Positions 247–544 (DHRKLGKELD…LIEEYKGAFP (298 aa)) are catalytic. Zn(2+) is bound by residues Cys-340, His-391, and His-521.

This sequence belongs to the class-II aminoacyl-tRNA synthetase family. As to quaternary structure, homodimer. The cofactor is Zn(2+).

The protein localises to the cytoplasm. The enzyme catalyses tRNA(Thr) + L-threonine + ATP = L-threonyl-tRNA(Thr) + AMP + diphosphate + H(+). Functionally, catalyzes the attachment of threonine to tRNA(Thr) in a two-step reaction: L-threonine is first activated by ATP to form Thr-AMP and then transferred to the acceptor end of tRNA(Thr). Also edits incorrectly charged L-seryl-tRNA(Thr). The chain is Threonine--tRNA ligase from Exiguobacterium sp. (strain ATCC BAA-1283 / AT1b).